The following is a 234-amino-acid chain: Adenosine 5'-phosphosulfate reductase (234 aa).

Cys120, Cys121, Cys203, and Cys206 together coordinate [4Fe-4S] cluster. Cys229 (nucleophile; cysteine thiosulfonate intermediate) is an active-site residue.

It belongs to the PAPS reductase family. CysH subfamily. [4Fe-4S] cluster is required as a cofactor.

Its subcellular location is the cytoplasm. It carries out the reaction [thioredoxin]-disulfide + sulfite + AMP + 2 H(+) = adenosine 5'-phosphosulfate + [thioredoxin]-dithiol. The protein operates within sulfur metabolism; hydrogen sulfide biosynthesis; sulfite from sulfate. Catalyzes the formation of sulfite from adenosine 5'-phosphosulfate (APS) using thioredoxin as an electron donor. The sequence is that of Adenosine 5'-phosphosulfate reductase from Bacillus cereus (strain 03BB102).